Here is a 507-residue protein sequence, read N- to C-terminus: WD-40 repeat-containing protein MSI4 (507 aa).

Met-1 is modified (N-acetylmethionine). A disordered region spans residues 1–66 (MESDEAAAVS…KTQQSPSVDE (66 aa)). WD repeat units follow at residues 95-137 (RWGP…KPRV), 162-202 (IHPG…NRHA), and 217-257 (GHQD…TTIG). The segment covering 258-272 (TDSKSSGSIIKQTGE) has biased composition (polar residues). The interval 258–282 (TDSKSSGSIIKQTGEGTDKNESPTV) is disordered. WD repeat units follow at residues 290-330 (GHED…NPVT), 335-375 (AHDA…ANGV), 384-424 (GHKA…KKSD), and 439-486 (GHRD…YRPE). The short motif at 308–323 (FCSVGDDSCLILWDAR) is the DWD box element.

Belongs to the WD repeat RBAP46/RBAP48/MSI1 family. As to quaternary structure, interacts with AHL16 and HOS1. Interacts with LHP1, PDP1, PDP2 and PDP3. Component of the PRC2 (polycomb repressive complex 2) complex which regulates histone methylation on histone H3K27. Expressed in rosette leaves, cauline leaves, main stems and developing fruits. Expressed at higher levels in roots and flowers.

The protein resides in the nucleus. In terms of biological role, core histone-binding subunit that may target chromatin assembly factors, chromatin remodeling factors and histone deacetylases to their histone substrates in a manner that is regulated by nucleosomal DNA. Component of the flowering autonomous pathway which positively regulates flowering by promoting transcriptional repression of the flowering repressor FLC. May promote histone deacetylation at the FLC locus leading to the formation of repressive chromatin structures. Forms a histone deacetylase complex with HDA5, HDA6 and FLD that represses FLC gene expression to control flowering time. Also negatively regulates cold-responsive genes. Acts together with PDP1 and MSI5 to regulate the function of the PRC2 complex on FLC. Required for systemic acquired resistance (SAR) toward pathogenic bacteria (e.g. Pseudomonas syringae pv tomato DC3000 (avrPto)). Together with FLD and MSI4/FVE, contributes to dehydroabietinal-dependent (DA, a diterpenoid tricyclic diterpene) activation of flowering ans SAR. The polypeptide is WD-40 repeat-containing protein MSI4 (Arabidopsis thaliana (Mouse-ear cress)).